A 242-amino-acid polypeptide reads, in one-letter code: Ubiquinone biosynthesis O-methyltransferase (242 aa).

S-adenosyl-L-methionine-binding residues include Arg44, Gly64, Asp85, and Met129.

This sequence belongs to the methyltransferase superfamily. UbiG/COQ3 family.

The catalysed reaction is a 3-demethylubiquinol + S-adenosyl-L-methionine = a ubiquinol + S-adenosyl-L-homocysteine + H(+). It carries out the reaction a 3-(all-trans-polyprenyl)benzene-1,2-diol + S-adenosyl-L-methionine = a 2-methoxy-6-(all-trans-polyprenyl)phenol + S-adenosyl-L-homocysteine + H(+). Its pathway is cofactor biosynthesis; ubiquinone biosynthesis. Functionally, O-methyltransferase that catalyzes the 2 O-methylation steps in the ubiquinone biosynthetic pathway. The protein is Ubiquinone biosynthesis O-methyltransferase of Klebsiella pneumoniae (strain 342).